The primary structure comprises 133 residues: Membrane protein FAM174B (133 aa).

A signal peptide spans 1–19 (MWLYTFAVALIVIAQEING). At 20–67 (EPHTRPSSATPLNATLPPQEEGSAQNTTDAAVGSRLSTILRDLPTIKN) the chain is on the extracellular side. The interval 22-47 (HTRPSSATPLNATLPPQEEGSAQNTT) is disordered. N-linked (GlcNAc...) asparagine glycosylation is found at N32, N45, and N67. Residues 68–88 (ISIFICVLTTLLITCLVIKIC) traverse the membrane as a helical segment. Residues 89–133 (RSARKIRKTRKYDIITTPAERVEMAPLNEENDEEDDSTLFDVKYR) lie on the Cytoplasmic side of the membrane. Residues 113–133 (APLNEENDEEDDSTLFDVKYR) form a disordered region. Over residues 117 to 126 (EENDEEDDST) the composition is skewed to acidic residues.

It belongs to the FAM174 family.

It is found in the cell membrane. Its subcellular location is the golgi apparatus. Functionally, essential for Golgi structural integrity. This chain is Membrane protein FAM174B (Fam174b), found in Danio rerio (Zebrafish).